Reading from the N-terminus, the 161-residue chain is Protein-export protein SecB (161 aa).

The protein belongs to the SecB family. As to quaternary structure, homotetramer, a dimer of dimers. One homotetramer interacts with 1 SecA dimer.

It is found in the cytoplasm. Its function is as follows. One of the proteins required for the normal export of preproteins out of the cell cytoplasm. It is a molecular chaperone that binds to a subset of precursor proteins, maintaining them in a translocation-competent state. It also specifically binds to its receptor SecA. In Bradyrhizobium diazoefficiens (strain JCM 10833 / BCRC 13528 / IAM 13628 / NBRC 14792 / USDA 110), this protein is Protein-export protein SecB.